The sequence spans 449 residues: Hyaluronidase-1 (449 aa).

An N-terminal signal peptide occupies residues 1–23 (MYHLWIKCLAAWIFLKRCNGVHA). 2 disulfides stabilise this stretch: C47/C340 and C211/C227. N-linked (GlcNAc...) asparagine glycans are attached at residues N67, N103, and N111. The Proton donor role is filled by E135. An N-linked (GlcNAc...) asparagine glycan is attached at N153. The N-linked (GlcNAc...) asparagine glycan is linked to N357. 3 disulfide bridges follow: C365–C376, C370–C427, and C429–C438. Residue N401 is glycosylated (N-linked (GlcNAc...) asparagine). The EGF-like domain occupies 427–438 (CQCYQGWKGLYC).

This sequence belongs to the glycosyl hydrolase 56 family. Monomer. Expressed by the venom gland.

The protein resides in the secreted. It carries out the reaction Random hydrolysis of (1-&gt;4)-linkages between N-acetyl-beta-D-glucosamine and D-glucuronate residues in hyaluronate.. Functionally, snake venom endo-hyaluronidase that degrades hyaluronan to smaller oligosaccharide fragments. In venom, it is not toxic by itself, but increases the diffusion of other venom proteins by degrading the extracellular matrix. In addition, it displays antiedematogenic activity. The sequence is that of Hyaluronidase-1 from Bitis arietans (African puff adder).